The following is a 335-amino-acid chain: Tryptophan--tRNA ligase (335 aa).

Residues 13–15 (QPS) and 21–22 (GN) each bind ATP. A 'HIGH' region motif is present at residues 14–22 (PSGELTIGN). Asp138 is an L-tryptophan binding site. ATP-binding positions include 150 to 152 (GKD), Ile189, and 198 to 202 (KMSKS). Residues 198-202 (KMSKS) carry the 'KMSKS' region motif.

The protein belongs to the class-I aminoacyl-tRNA synthetase family. As to quaternary structure, homodimer.

The protein resides in the cytoplasm. It carries out the reaction tRNA(Trp) + L-tryptophan + ATP = L-tryptophyl-tRNA(Trp) + AMP + diphosphate + H(+). In terms of biological role, catalyzes the attachment of tryptophan to tRNA(Trp). This is Tryptophan--tRNA ligase from Clostridium acetobutylicum (strain ATCC 824 / DSM 792 / JCM 1419 / IAM 19013 / LMG 5710 / NBRC 13948 / NRRL B-527 / VKM B-1787 / 2291 / W).